A 365-amino-acid chain; its full sequence is UDP-N-acetylglucosamine--N-acetylmuramyl-(pentapeptide) pyrophosphoryl-undecaprenol N-acetylglucosamine transferase (365 aa).

UDP-N-acetyl-alpha-D-glucosamine-binding positions include 11–13 (TGG), Asn124, Arg165, Ser192, Ile246, and Gln291.

This sequence belongs to the glycosyltransferase 28 family. MurG subfamily.

It localises to the cell inner membrane. It catalyses the reaction di-trans,octa-cis-undecaprenyl diphospho-N-acetyl-alpha-D-muramoyl-L-alanyl-D-glutamyl-meso-2,6-diaminopimeloyl-D-alanyl-D-alanine + UDP-N-acetyl-alpha-D-glucosamine = di-trans,octa-cis-undecaprenyl diphospho-[N-acetyl-alpha-D-glucosaminyl-(1-&gt;4)]-N-acetyl-alpha-D-muramoyl-L-alanyl-D-glutamyl-meso-2,6-diaminopimeloyl-D-alanyl-D-alanine + UDP + H(+). Its pathway is cell wall biogenesis; peptidoglycan biosynthesis. Cell wall formation. Catalyzes the transfer of a GlcNAc subunit on undecaprenyl-pyrophosphoryl-MurNAc-pentapeptide (lipid intermediate I) to form undecaprenyl-pyrophosphoryl-MurNAc-(pentapeptide)GlcNAc (lipid intermediate II). The chain is UDP-N-acetylglucosamine--N-acetylmuramyl-(pentapeptide) pyrophosphoryl-undecaprenol N-acetylglucosamine transferase from Nitratidesulfovibrio vulgaris (strain DP4) (Desulfovibrio vulgaris).